The primary structure comprises 128 residues: Sulfurtransferase TusD (128 aa).

C78 serves as the catalytic Cysteine persulfide intermediate.

This sequence belongs to the DsrE/TusD family. In terms of assembly, heterohexamer, formed by a dimer of trimers. The hexameric TusBCD complex contains 2 copies each of TusB, TusC and TusD. The TusBCD complex interacts with TusE.

The protein localises to the cytoplasm. In terms of biological role, part of a sulfur-relay system required for 2-thiolation of 5-methylaminomethyl-2-thiouridine (mnm(5)s(2)U) at tRNA wobble positions. Accepts sulfur from TusA and transfers it in turn to TusE. The polypeptide is Sulfurtransferase TusD (Escherichia coli O17:K52:H18 (strain UMN026 / ExPEC)).